The chain runs to 266 residues: Methionine aminopeptidase (266 aa).

His80 is a binding site for substrate. Asp98, Asp109, and His172 together coordinate a divalent metal cation. His179 contributes to the substrate binding site. Positions 206 and 237 each coordinate a divalent metal cation.

Belongs to the peptidase M24A family. Methionine aminopeptidase type 1 subfamily. In terms of assembly, monomer. It depends on Co(2+) as a cofactor. Zn(2+) serves as cofactor. Requires Mn(2+) as cofactor. The cofactor is Fe(2+).

It carries out the reaction Release of N-terminal amino acids, preferentially methionine, from peptides and arylamides.. Its function is as follows. Removes the N-terminal methionine from nascent proteins. The N-terminal methionine is often cleaved when the second residue in the primary sequence is small and uncharged (Met-Ala-, Cys, Gly, Pro, Ser, Thr, or Val). Requires deformylation of the N(alpha)-formylated initiator methionine before it can be hydrolyzed. The polypeptide is Methionine aminopeptidase (Buchnera aphidicola subsp. Baizongia pistaciae (strain Bp)).